The following is a 430-amino-acid chain: Glutamate-1-semialdehyde 2,1-aminomutase (430 aa).

Lys-270 carries the post-translational modification N6-(pyridoxal phosphate)lysine.

Belongs to the class-III pyridoxal-phosphate-dependent aminotransferase family. HemL subfamily. In terms of assembly, homodimer. The cofactor is pyridoxal 5'-phosphate.

Its subcellular location is the cytoplasm. It catalyses the reaction (S)-4-amino-5-oxopentanoate = 5-aminolevulinate. Its pathway is porphyrin-containing compound metabolism; protoporphyrin-IX biosynthesis; 5-aminolevulinate from L-glutamyl-tRNA(Glu): step 2/2. The protein is Glutamate-1-semialdehyde 2,1-aminomutase of Cupriavidus metallidurans (strain ATCC 43123 / DSM 2839 / NBRC 102507 / CH34) (Ralstonia metallidurans).